A 295-amino-acid chain; its full sequence is Fructose-bisphosphate aldolase class 1 (295 aa).

Residue Glu176 is the Proton acceptor of the active site. Catalysis depends on Lys213, which acts as the Schiff-base intermediate with dihydroxyacetone-P.

Belongs to the class I fructose-bisphosphate aldolase family.

The catalysed reaction is beta-D-fructose 1,6-bisphosphate = D-glyceraldehyde 3-phosphate + dihydroxyacetone phosphate. It participates in carbohydrate degradation; glycolysis; D-glyceraldehyde 3-phosphate and glycerone phosphate from D-glucose: step 4/4. The chain is Fructose-bisphosphate aldolase class 1 from Clostridium beijerinckii (strain ATCC 51743 / NCIMB 8052) (Clostridium acetobutylicum).